The sequence spans 599 residues: Laccase-2 (599 aa).

The N-terminal stretch at 1–19 (MARSTTSLFALSLVASAFA) is a signal peptide. Plastocyanin-like domains lie at 21–145 (VVDY…IVIY) and 157–307 (VDDE…LVYE). H82, H84, H127, and H129 together coordinate Cu cation. A disulfide bridge connects residues C103 and C588. Residues N207, N208, N231, N397, and N443 are each glycosylated (N-linked (GlcNAc...) asparagine). Residues 450–567 (DVPTLLKILT…EGFAMVFAEA (118 aa)) enclose the Plastocyanin-like 3 domain. Residues H497, H500, H502, H549, C550, H551, and H555 each contribute to the Cu cation site.

It belongs to the multicopper oxidase family. In terms of assembly, homodimer. Requires Cu cation as cofactor. In mycelia, at a lower level than LCC4.

The protein resides in the secreted. The catalysed reaction is 4 hydroquinone + O2 = 4 benzosemiquinone + 2 H2O. Lignin degradation and detoxification of lignin-derived products. This chain is Laccase-2 (LCC2), found in Thanatephorus cucumeris (Black scurf of potato).